The sequence spans 508 residues: Probable malate:quinone oxidoreductase (508 aa).

This sequence belongs to the MQO family. FAD is required as a cofactor.

The catalysed reaction is (S)-malate + a quinone = a quinol + oxaloacetate. It functions in the pathway carbohydrate metabolism; tricarboxylic acid cycle; oxaloacetate from (S)-malate (quinone route): step 1/1. This is Probable malate:quinone oxidoreductase from Chromohalobacter salexigens (strain ATCC BAA-138 / DSM 3043 / CIP 106854 / NCIMB 13768 / 1H11).